A 449-amino-acid polypeptide reads, in one-letter code: Ribulose bisphosphate carboxylase large chain (449 aa).

Residue K5 is modified to N6,N6,N6-trimethyllysine. The substrate site is built by N114 and T164. K166 functions as the Proton acceptor in the catalytic mechanism. Substrate is bound at residue K168. 3 residues coordinate Mg(2+): K192, D194, and E195. Residue K192 is modified to N6-carboxylysine. Catalysis depends on H285, which acts as the Proton acceptor. Substrate-binding residues include R286, H318, and S370.

This sequence belongs to the RuBisCO large chain family. Type I subfamily. As to quaternary structure, heterohexadecamer of 8 large chains and 8 small chains; disulfide-linked. The disulfide link is formed within the large subunit homodimers. It depends on Mg(2+) as a cofactor. The disulfide bond which can form in the large chain dimeric partners within the hexadecamer appears to be associated with oxidative stress and protein turnover.

It localises to the plastid. The protein resides in the chloroplast. The enzyme catalyses 2 (2R)-3-phosphoglycerate + 2 H(+) = D-ribulose 1,5-bisphosphate + CO2 + H2O. The catalysed reaction is D-ribulose 1,5-bisphosphate + O2 = 2-phosphoglycolate + (2R)-3-phosphoglycerate + 2 H(+). Functionally, ruBisCO catalyzes two reactions: the carboxylation of D-ribulose 1,5-bisphosphate, the primary event in carbon dioxide fixation, as well as the oxidative fragmentation of the pentose substrate in the photorespiration process. Both reactions occur simultaneously and in competition at the same active site. The chain is Ribulose bisphosphate carboxylase large chain from Zamioculcas zamiifolia (Aroid palm).